The primary structure comprises 156 residues: Small ribosomal subunit protein uS7 (156 aa).

This sequence belongs to the universal ribosomal protein uS7 family. Part of the 30S ribosomal subunit. Contacts proteins S9 and S11.

Its function is as follows. One of the primary rRNA binding proteins, it binds directly to 16S rRNA where it nucleates assembly of the head domain of the 30S subunit. Is located at the subunit interface close to the decoding center, probably blocks exit of the E-site tRNA. The sequence is that of Small ribosomal subunit protein uS7 from Shewanella sp. (strain W3-18-1).